Here is a 361-residue protein sequence, read N- to C-terminus: Ribosomal RNA large subunit methyltransferase M (361 aa).

S-adenosyl-L-methionine-binding positions include Ser187, 220-223 (CPGG), Asp239, Asp259, and Asp276. The Proton acceptor role is filled by Lys305.

This sequence belongs to the class I-like SAM-binding methyltransferase superfamily. RNA methyltransferase RlmE family. RlmM subfamily. In terms of assembly, monomer.

It is found in the cytoplasm. It carries out the reaction cytidine(2498) in 23S rRNA + S-adenosyl-L-methionine = 2'-O-methylcytidine(2498) in 23S rRNA + S-adenosyl-L-homocysteine + H(+). Functionally, catalyzes the 2'-O-methylation at nucleotide C2498 in 23S rRNA. The polypeptide is Ribosomal RNA large subunit methyltransferase M (Shewanella amazonensis (strain ATCC BAA-1098 / SB2B)).